Here is an 846-residue protein sequence, read N- to C-terminus: Spindle pole body component SPC98 (846 aa).

Ser124 and Ser136 each carry phosphoserine.

It belongs to the TUBGCP family. Interacts with TUB4, SPC72 and SPC97.

It is found in the nucleus. The protein localises to the cytoplasm. The protein resides in the cytoskeleton. It localises to the microtubule organizing center. Its subcellular location is the spindle pole body. Its function is as follows. Involved in microtubule organization by the microtubule organizing center, the spindle pole body (SPB). Probably part of the microtubule attachment site at the SPB. The polypeptide is Spindle pole body component SPC98 (SPC98) (Saccharomyces cerevisiae (strain ATCC 204508 / S288c) (Baker's yeast)).